We begin with the raw amino-acid sequence, 261 residues long: tRNA pseudouridine synthase A (261 aa).

Catalysis depends on D51, which acts as the Nucleophile. Y109 contributes to the substrate binding site.

The protein belongs to the tRNA pseudouridine synthase TruA family. Homodimer.

It catalyses the reaction uridine(38/39/40) in tRNA = pseudouridine(38/39/40) in tRNA. Formation of pseudouridine at positions 38, 39 and 40 in the anticodon stem and loop of transfer RNAs. The sequence is that of tRNA pseudouridine synthase A from Shewanella denitrificans (strain OS217 / ATCC BAA-1090 / DSM 15013).